Here is a 513-residue protein sequence, read N- to C-terminus: Fumarate reductase (513 aa).

Residue 41–55 participates in FAD binding; it reads AIVIGGGLAGLSATN. The residue at position 100 (serine 100) is a Phosphoserine. Catalysis depends on residues histidine 288 and arginine 311.

It belongs to the FAD-dependent oxidoreductase 2 family. FRD/SDH subfamily. The cofactor is FAD.

The protein resides in the cytoplasm. It is found in the mitochondrion. It localises to the nucleus. The catalysed reaction is succinate + NAD(+) = fumarate + NADH + H(+). Its function is as follows. Irreversibly catalyzes the reduction of fumarate to succinate. The chain is Fumarate reductase (osm1) from Schizosaccharomyces pombe (strain 972 / ATCC 24843) (Fission yeast).